A 309-amino-acid chain; its full sequence is uncharacterized protein (309 aa).

Belongs to the anthranilate phosphoribosyltransferase family.

This is an uncharacterized protein from Aquifex aeolicus (strain VF5).